Reading from the N-terminus, the 95-residue chain is Small ribosomal subunit protein bS18 (95 aa).

Belongs to the bacterial ribosomal protein bS18 family. In terms of assembly, part of the 30S ribosomal subunit. Forms a tight heterodimer with protein bS6.

Its function is as follows. Binds as a heterodimer with protein bS6 to the central domain of the 16S rRNA, where it helps stabilize the platform of the 30S subunit. This chain is Small ribosomal subunit protein bS18, found in Rickettsia massiliae (strain Mtu5).